Here is a 380-residue protein sequence, read N- to C-terminus: Lipid-A-disaccharide synthase (380 aa).

Belongs to the LpxB family.

It catalyses the reaction a lipid X + a UDP-2-N,3-O-bis[(3R)-3-hydroxyacyl]-alpha-D-glucosamine = a lipid A disaccharide + UDP + H(+). Its pathway is bacterial outer membrane biogenesis; LPS lipid A biosynthesis. Functionally, condensation of UDP-2,3-diacylglucosamine and 2,3-diacylglucosamine-1-phosphate to form lipid A disaccharide, a precursor of lipid A, a phosphorylated glycolipid that anchors the lipopolysaccharide to the outer membrane of the cell. This is Lipid-A-disaccharide synthase from Francisella tularensis subsp. novicida (strain U112).